The chain runs to 400 residues: Leukosialin (400 aa).

An N-terminal signal peptide occupies residues 1 to 19; that stretch reads MATLLLLLGVLVVSPDALG. At 20 to 253 the chain is on the extracellular side; sequence STTAVQTPTS…PFRNPDENSR (234 aa). O-linked (GalNAc...) threonine glycosylation is found at T21, T22, T26, and T28. Polar residues-rich tracts occupy residues 21–51 and 58–112; these read TTAV…SITS and TGDQ…TPHA. The disordered stretch occupies residues 21–224; the sequence is TTAVQTPTSG…SSGASGPQVS (204 aa). S29 and S35 each carry an O-linked (GalNAc...) serine glycan. T36 is a glycosylation site (O-linked (GalNAc...) threonine). O-linked (GalNAc...) serine glycosylation is found at S37, S41, and S42. T46 and T47 each carry an O-linked (GalNAc...) threonine glycan. S48 is a glycosylation site (O-linked (GalNAc...) serine). O-linked (GalNAc...) threonine glycosylation is found at T50, T58, and T69. S99 and S103 each carry an O-linked (GalNAc...) serine glycan. O-linked (GalNAc...) threonine glycosylation is found at T109 and T113. An O-linked (GalNAc...) serine glycan is attached at S114. Composition is skewed to polar residues over residues 121–164 and 172–182; these read TANS…SRGT and ATVSLETSKGT. T136, T137, T173, and T178 each carry an O-linked (GalNAc...) threonine glycan. A compositionally biased stretch (low complexity) spans 196–211; sequence TSTGTTGPPVTMTTGS. Polar residues predominate over residues 212 to 224; it reads LEPSSGASGPQVS. N239 carries N-linked (GlcNAc...) asparagine glycosylation. Residues 254 to 276 form a helical membrane-spanning segment; sequence GMLPVAVLVALLAVIVLVALLLL. Residues 277–400 are Cytoplasmic-facing; that stretch reads WRRRQKRRTG…EPEGGDGAAP (124 aa). The required for interaction with EZR, MSN and RDX and for co-localization to microvilli stretch occupies residues 278–308; it reads RRRQKRRTGALVLSRGGKRNGVVDAWAGPAQ. Residues 282-296 carry the Nuclear localization signal motif; it reads KRRTGALVLSRGGKR. The residue at position 291 (S291) is a Phosphoserine. Gly residues predominate over residues 320–332; that stretch reads GGSGGDKGSGFPD. Residues 320 to 400 are disordered; it reads GGSGGDKGSG…EPEGGDGAAP (81 aa). S336 carries the post-translational modification Phosphoserine. At T341 the chain carries Phosphothreonine. A Phosphoserine modification is found at S351. S355 bears the Phosphoserine; by PKC/PRKCQ mark. Residues S368 and S379 each carry the phosphoserine modification.

In terms of assembly, interacts with SIGLEC1. Monomer. Interacts with CTNNB1. Interacts with RDX (via FERM domain), EZR and MSN. Glycosylated; has a high content of sialic acid and O-linked carbohydrate structures. Post-translationally, phosphorylation at Ser-355 is regulated by chemokines, requires its association with ERM proteins (EZR, RDX and MSN) and is essential for its function in the regulation of T-cell trafficking to lymph nodes. In terms of processing, has a high content of sialic acid and O-linked carbohydrate structures. Cleavage by CTSG releases its extracellular domain and triggers its intramembrane proteolysis by gamma-secretase releasing the CD43 cytoplasmic tail chain (CD43-ct) which translocates to the nucleus. Post-translationally, sumoylated. As to expression, cell surface of thymocytes, T-lymphocytes, neutrophils, plasma cells and myelomas.

The protein resides in the membrane. It localises to the cell projection. The protein localises to the microvillus. It is found in the uropodium. Its subcellular location is the nucleus. The protein resides in the PML body. Its function is as follows. Predominant cell surface sialoprotein of leukocytes which regulates multiple T-cell functions, including T-cell activation, proliferation, differentiation, trafficking and migration. Positively regulates T-cell trafficking to lymph-nodes via its association with ERM proteins (EZR, RDX and MSN). Negatively regulates Th2 cell differentiation and predisposes the differentiation of T-cells towards a Th1 lineage commitment. Promotes the expression of IFN-gamma by T-cells during T-cell receptor (TCR) activation of naive cells and induces the expression of IFN-gamma by CD4(+) T-cells and to a lesser extent by CD8(+) T-cells. Plays a role in preparing T-cells for cytokine sensing and differentiation into effector cells by inducing the expression of cytokine receptors IFNGR and IL4R, promoting IFNGR and IL4R signaling and by mediating the clustering of IFNGR with TCR. Acts as a major E-selectin ligand responsible for Th17 cell rolling on activated vasculature and recruitment during inflammation. Mediates Th17 cells, but not Th1 cells, adhesion to E-selectin. Acts as a T-cell counter-receptor for SIGLEC1. Functionally, protects cells from apoptotic signals, promoting cell survival. This is Leukosialin (SPN) from Homo sapiens (Human).